A 901-amino-acid polypeptide reads, in one-letter code: Aconitate hydratase A (901 aa).

[4Fe-4S] cluster contacts are provided by cysteine 443, cysteine 509, and cysteine 512.

Belongs to the aconitase/IPM isomerase family. As to quaternary structure, monomer. Requires [4Fe-4S] cluster as cofactor.

It catalyses the reaction citrate = D-threo-isocitrate. The enzyme catalyses (2S,3R)-3-hydroxybutane-1,2,3-tricarboxylate = 2-methyl-cis-aconitate + H2O. The protein operates within carbohydrate metabolism; tricarboxylic acid cycle; isocitrate from oxaloacetate: step 2/2. It participates in organic acid metabolism; propanoate degradation. In terms of biological role, involved in the catabolism of short chain fatty acids (SCFA) via the tricarboxylic acid (TCA)(acetyl degradation route) and probably the 2-methylcitrate cycle I (propionate degradation route). Catalyzes the reversible isomerization of citrate to isocitrate via cis-aconitate. Could catalyze the hydration of 2-methyl-cis-aconitate to yield (2R,3S)-2-methylisocitrate. The apo form of AcnA functions as a RNA-binding regulatory protein. In Staphylococcus aureus (strain MRSA252), this protein is Aconitate hydratase A (acnA).